Here is a 440-residue protein sequence, read N- to C-terminus: MPTYFDQLERVRYEGPKTTNLLAFRHYNPDELVAGKRMEDHLRFAACYWHTFCWNGSDMFGVGAFERPWQQAGDALSLAKRKADVAFEFFHKLNVPYYCFHDVDVSPEGASLKEYLNNFAQMVEVLAQKQQESGVKLLWGTANCFTHPRYGAGAATNPDPEVFSWAATQVVTAMNATHQLGGENYVLWGGREGYETLLNTDLRQEREQLGRFMQMVVEHKHKTGFRGTLLIEPKPQEPTKHQYDYDAATVYGFLKQFGLEKEIKLNIEANHATLAGHSFHHEIASAIALGLFGSVDANRGDPQLGWDTDQFPNSVEENALVMYEILKAGGFTTGGLNFDAKVRRQSTDKYDLFYGHIGAMDTMALSLKVAAKMLEEGELDKRVARRYAGWNGELGQQILKGQMTLAELAQYAEQHNLAPQHQSGHQEQLENLVNYYLFDK.

Residues histidine 101 and aspartate 104 contribute to the active site. Mg(2+)-binding residues include glutamate 232, glutamate 268, histidine 271, aspartate 296, aspartate 307, aspartate 309, and aspartate 339.

This sequence belongs to the xylose isomerase family. As to quaternary structure, homotetramer. The cofactor is Mg(2+).

The protein resides in the cytoplasm. The catalysed reaction is alpha-D-xylose = alpha-D-xylulofuranose. This chain is Xylose isomerase, found in Cronobacter sakazakii (strain ATCC BAA-894) (Enterobacter sakazakii).